Reading from the N-terminus, the 106-residue chain is Small ribosomal subunit protein bS16 (106 aa).

It belongs to the bacterial ribosomal protein bS16 family.

The protein is Small ribosomal subunit protein bS16 of Wolbachia pipientis wMel.